The following is a 418-amino-acid chain: Gamma-glutamyl phosphate reductase (418 aa).

It belongs to the gamma-glutamyl phosphate reductase family.

The protein localises to the cytoplasm. The catalysed reaction is L-glutamate 5-semialdehyde + phosphate + NADP(+) = L-glutamyl 5-phosphate + NADPH + H(+). It participates in amino-acid biosynthesis; L-proline biosynthesis; L-glutamate 5-semialdehyde from L-glutamate: step 2/2. In terms of biological role, catalyzes the NADPH-dependent reduction of L-glutamate 5-phosphate into L-glutamate 5-semialdehyde and phosphate. The product spontaneously undergoes cyclization to form 1-pyrroline-5-carboxylate. This is Gamma-glutamyl phosphate reductase from Teredinibacter turnerae (strain ATCC 39867 / T7901).